A 177-amino-acid chain; its full sequence is MSHQQPPSYATEPNTMFVQADPSNFRNIVQKLTGAPPDISSSSFSAVSAAHQKLPLTPKKPAFKLHERRQSSKKMELKVNNITNPNDAFSHFHRGFLVSPVSHLDPFWARVSPHSAREEHHAQPDKEEQKAIAEKGFYFLPSPRSGSEPAPELLPLFPLRSPNGTNHRIHEDNHRDS.

The short motif at 25–34 is the VQ element; it reads FRNIVQKLTG. 5 positions are modified to phosphoserine: Ser-43, Ser-99, Ser-115, Ser-142, and Ser-145. Residues 115–133 are compositionally biased toward basic and acidic residues; the sequence is SAREEHHAQPDKEEQKAIA. Residues 115 to 177 form a disordered region; that stretch reads SAREEHHAQP…RIHEDNHRDS (63 aa). The segment covering 148–159 has biased composition (low complexity); it reads EPAPELLPLFPL. At Ser-161 the chain carries Phosphoserine. Over residues 168-177 the composition is skewed to basic and acidic residues; sequence RIHEDNHRDS.

Post-translationally, phosphorylated on serine residues by MPK6.

It localises to the nucleus. Its function is as follows. May modulate WRKY transcription factor activities. The chain is VQ motif-containing protein 11 from Arabidopsis thaliana (Mouse-ear cress).